The sequence spans 293 residues: UPF0282 protein MK0213 (293 aa).

This sequence belongs to the UPF0282 family.

The polypeptide is UPF0282 protein MK0213 (Methanopyrus kandleri (strain AV19 / DSM 6324 / JCM 9639 / NBRC 100938)).